Reading from the N-terminus, the 737-residue chain is 1,4-alpha-glucan branching enzyme GlgB (737 aa).

Asp-419 (nucleophile) is an active-site residue. Glu-472 serves as the catalytic Proton donor.

This sequence belongs to the glycosyl hydrolase 13 family. GlgB subfamily. As to quaternary structure, monomer.

The enzyme catalyses Transfers a segment of a (1-&gt;4)-alpha-D-glucan chain to a primary hydroxy group in a similar glucan chain.. It functions in the pathway glycan biosynthesis; glycogen biosynthesis. Catalyzes the formation of the alpha-1,6-glucosidic linkages in glycogen by scission of a 1,4-alpha-linked oligosaccharide from growing alpha-1,4-glucan chains and the subsequent attachment of the oligosaccharide to the alpha-1,6 position. The chain is 1,4-alpha-glucan branching enzyme GlgB from Cellvibrio japonicus (strain Ueda107) (Pseudomonas fluorescens subsp. cellulosa).